The sequence spans 493 residues: MEEYIMVLDQGSTRSKCILFDKKGEVLGESEREVEPIYPKLGWMEYNPVNIWASQFSVTTELLAKYNISIEKIASIGITNQRETVLVWDKRTGIPVYNAIAWQCRRTVEISEELNKKGYGKVIKEKTGLVLDPYFSATKIKWILDNVEGARKEAERGNLAFGTMDSWLIWNLTKGEKHMTDYSNASRTMLFNIHTLQWDEELLEIFQIPKSMLPEVGPSSHVYGHTDSILFGKEVPIGGVAGDQNSSLFGQTAFEEGAAKNTYGTGCFMLMNTGNKPINSQKGLITTIAWGLDGEVTYALEGSVFMAGEGINWIKDNLRMIDSLEDAEEYALSVEDTNNVYMVPAFGGLGAPYWNPEAKGVVIGLTRGSKKEHFIRAVIESLAYQSYDVLKAMEEDSGIVLKNLRVDGQYSVNNFLMQFQSDILNCKVEKPKNILNIAGLGAAYFAGLAVGFWKNKEDILKNNGIEKEFNSSIDDRRRKVLVEGWKEAIKRTI.

Ser12 is a binding site for ADP. Ser12 and Thr13 together coordinate ATP. Ser12 is a binding site for sn-glycerol 3-phosphate. ADP is bound at residue Lys16. The sn-glycerol 3-phosphate site is built by Arg82, Glu83, Tyr134, and Asp243. Glycerol-binding residues include Arg82, Glu83, Tyr134, Asp243, and Gln244. ADP contacts are provided by Thr265 and Gly308. Residues Thr265, Gly308, and Asn312 each contribute to the ATP site. Residue Asn413 participates in ADP binding.

This sequence belongs to the FGGY kinase family. In terms of assembly, homotetramer and homodimer (in equilibrium).

It carries out the reaction glycerol + ATP = sn-glycerol 3-phosphate + ADP + H(+). It participates in polyol metabolism; glycerol degradation via glycerol kinase pathway; sn-glycerol 3-phosphate from glycerol: step 1/1. Its activity is regulated as follows. Activated by phosphorylation and inhibited by fructose 1,6-bisphosphate (FBP). Its function is as follows. Key enzyme in the regulation of glycerol uptake and metabolism. Catalyzes the phosphorylation of glycerol to yield sn-glycerol 3-phosphate. In Clostridium tetani (strain Massachusetts / E88), this protein is Glycerol kinase 2.